Consider the following 89-residue polypeptide: Small cysteine-rich protein 1 (89 aa).

Residues 1–20 (MDVRFRLCLFLVILVIVANA) form the signal peptide. Positions 21 to 27 (NVIKEPE) are excised as a propeptide.

Belongs to the Cnidaria small cysteine-rich protein (SCRiP) family. gamma subfamily. Post-translationally, contains 4 disulfide bonds.

The protein localises to the secreted. It localises to the nematocyst. Its function is as follows. Induces neurotoxic symptoms on zebrafish. Has also been claimed to be implied in calcification, but tests on homolog proteins suggest that proteins of this family have a neurotoxic function and not a calcification function. The chain is Small cysteine-rich protein 1 from Acropora millepora (Staghorn coral).